Consider the following 321-residue polypeptide: Cytochrome f (321 aa).

The N-terminal stretch at 1 to 35 (MQNTNTLNWINKLIYLSISIPIFFLILVTTYPNSV) is a signal peptide. Heme is bound by residues Tyr38, Cys58, Cys61, and His62. A helical membrane pass occupies residues 287–307 (MEGLILFFISVILAQVFLVLK).

Belongs to the cytochrome f family. As to quaternary structure, the 4 large subunits of the cytochrome b6-f complex are cytochrome b6, subunit IV (17 kDa polypeptide, petD), cytochrome f and the Rieske protein, while the 4 small subunits are PetG, PetL, PetM and PetN. The complex functions as a dimer. The cofactor is heme.

It is found in the plastid. Its subcellular location is the chloroplast thylakoid membrane. Functionally, component of the cytochrome b6-f complex, which mediates electron transfer between photosystem II (PSII) and photosystem I (PSI), cyclic electron flow around PSI, and state transitions. The chain is Cytochrome f from Chara vulgaris (Common stonewort).